The chain runs to 334 residues: Nucleoid-associated protein plu2870 (334 aa).

It belongs to the YejK family.

It localises to the cytoplasm. The protein localises to the nucleoid. The sequence is that of Nucleoid-associated protein plu2870 from Photorhabdus laumondii subsp. laumondii (strain DSM 15139 / CIP 105565 / TT01) (Photorhabdus luminescens subsp. laumondii).